The following is a 543-amino-acid chain: Serine/threonine-protein kinase Chk2 (543 aa).

The interval 1 to 66 (MSRESDVEAQ…SGTLSSLETV (66 aa)) is disordered. The segment covering 8–22 (EAQQSHGSSACSQPH) has biased composition (polar residues). The segment covering 23 to 62 (GSVTQSQGSSSQSQGISSSSTSTMPNSSQSSHSSSGTLSS) has biased composition (low complexity). Ser-62 is modified (phosphoserine; by PLK3). Thr-68 is subject to Phosphothreonine; by ATM and MAP3K20. Ser-73 is modified (phosphoserine; by PLK3). The FHA domain occupies 113 to 175 (YWFGRDKSCE…NGTFVNTELV (63 aa)). The Protein kinase domain occupies 220–486 (YIMSKTLGSG…TEEALRHPWL (267 aa)). Residues 227 to 234 (GSGACGEV), Lys-249, and 302 to 308 (ELMEGGE) contribute to the ATP site. The active-site Proton acceptor is the Asp-347. Residues 351 to 352 (EN) and Asp-368 each bind ATP. The tract at residues 368-394 (DFGHSKILGETSLMRTLCGTPTYLAPE) is T-loop/activation segment. Phosphoserine; by autocatalysis is present on Ser-379. Phosphothreonine; by autocatalysis is present on residues Thr-383 and Thr-387. Ser-456 bears the Phosphoserine mark. The segment covering 506–517 (TALPQVLAQPST) has biased composition (polar residues). The interval 506–538 (TALPQVLAQPSTSRKRPREGEAEGAETTKRPAV) is disordered. The span at 523-534 (REGEAEGAETTK) shows a compositional bias: basic and acidic residues.

This sequence belongs to the protein kinase superfamily. CAMK Ser/Thr protein kinase family. CHK2 subfamily. In terms of assembly, homodimer. Homodimerization is part of the activation process but the dimer may dissociate following activation. Interacts with PML. Interacts with TP53. Interacts with RB1; phosphorylates RB1. Interacts with BRCA1. Interacts (phosphorylated at Thr-68) with MDC1; requires ATM-mediated phosphorylation of CHEK2. Interacts with TP53BP1; modulates CHEK2 phosphorylation at Thr-68 in response to ionizing radiation. Interacts with CDC25A; phosphorylates CDC25A and mediates its degradation in response to ionizing radiation. Interacts with CUL1; mediates CHEK2 ubiquitination and regulation. Interacts with CDKN2AIP. Interacts (via protein kinase domain) with CCAR2 (via N-terminus). Interacts with SIRT1. Mg(2+) is required as a cofactor. Phosphorylated. Phosphorylated at Ser-73 by PLK3 in response to DNA damage, promoting phosphorylation at Thr-68 by ATM and the G2/M transition checkpoint. Phosphorylation at Thr-68 induces homodimerization. Autophosphorylates at Thr-383 and Thr-387 in the T-loop/activation segment upon dimerization to become fully active and phosphorylate its substrates like for instance CDC25C. DNA damage-induced autophosphorylation at Ser-379 induces CUL1-mediated ubiquitination and regulates the pro-apoptotic function. Phosphorylation at Ser-456 also regulates ubiquitination. Phosphorylated by PLK4. Post-translationally, ubiquitinated. CUL1-mediated ubiquitination regulates the pro-apoptotic function. Ubiquitination may also regulate protein stability. Ubiquitinated by RNF8 via 'Lys-48'-linked ubiquitination. In terms of tissue distribution, high expression is found in testis, spleen, colon and peripheral blood leukocytes. Low expression is found in other tissues.

The protein localises to the nucleus. The protein resides in the PML body. Its subcellular location is the nucleoplasm. It carries out the reaction L-seryl-[protein] + ATP = O-phospho-L-seryl-[protein] + ADP + H(+). It catalyses the reaction L-threonyl-[protein] + ATP = O-phospho-L-threonyl-[protein] + ADP + H(+). Activated through phosphorylation at Thr-68 by ATM in response to DNA double-strand breaks. Activation is modulated by several mediators including MDC1 and TP53BP1. Induces homodimerization with exchange of the T-loop/activation segment between protomers and transphosphorylation of the protomers. The autophosphorylated kinase dimer is fully active. Negatively regulated by PPM1D through dephosphorylation of Thr-68. Serine/threonine-protein kinase which is required for checkpoint-mediated cell cycle arrest, activation of DNA repair and apoptosis in response to the presence of DNA double-strand breaks. May also negatively regulate cell cycle progression during unperturbed cell cycles. Following activation, phosphorylates numerous effectors preferentially at the consensus sequence [L-X-R-X-X-S/T]. Regulates cell cycle checkpoint arrest through phosphorylation of CDC25A, CDC25B and CDC25C, inhibiting their activity. Inhibition of CDC25 phosphatase activity leads to increased inhibitory tyrosine phosphorylation of CDK-cyclin complexes and blocks cell cycle progression. May also phosphorylate NEK6 which is involved in G2/M cell cycle arrest. Regulates DNA repair through phosphorylation of BRCA2, enhancing the association of RAD51 with chromatin which promotes DNA repair by homologous recombination. Also stimulates the transcription of genes involved in DNA repair (including BRCA2) through the phosphorylation and activation of the transcription factor FOXM1. Regulates apoptosis through the phosphorylation of p53/TP53, MDM4 and PML. Phosphorylation of p53/TP53 at 'Ser-20' by CHEK2 may alleviate inhibition by MDM2, leading to accumulation of active p53/TP53. Phosphorylation of MDM4 may also reduce degradation of p53/TP53. Also controls the transcription of pro-apoptotic genes through phosphorylation of the transcription factor E2F1. Tumor suppressor, it may also have a DNA damage-independent function in mitotic spindle assembly by phosphorylating BRCA1. Its absence may be a cause of the chromosomal instability observed in some cancer cells. Promotes the CCAR2-SIRT1 association and is required for CCAR2-mediated SIRT1 inhibition. Under oxidative stress, promotes ATG7 ubiquitination by phosphorylating the E3 ubiquitin ligase TRIM32 at 'Ser-55' leading to positive regulation of the autophagosme assembly. In terms of biological role, (Microbial infection) Phosphorylates herpes simplex virus 1/HHV-1 protein ICP0 and thus activates its SUMO-targeted ubiquitin ligase activity. This is Serine/threonine-protein kinase Chk2 from Homo sapiens (Human).